The chain runs to 449 residues: tRNA-2-methylthio-N(6)-dimethylallyladenosine synthase (449 aa).

Residues 3–124 (KMLYIKTYGC…LPTMLEKLDS (122 aa)) enclose the MTTase N-terminal domain. Positions 12, 48, 87, 163, 167, and 170 each coordinate [4Fe-4S] cluster. A Radical SAM core domain is found at 149 to 380 (KSPTVSGLVS…QAQLMQQQLE (232 aa)). The TRAM domain maps to 383–447 (QKLIGKVVPV…ASSLFGEVYA (65 aa)).

The protein belongs to the methylthiotransferase family. MiaB subfamily. As to quaternary structure, monomer. [4Fe-4S] cluster serves as cofactor.

It is found in the cytoplasm. The enzyme catalyses N(6)-dimethylallyladenosine(37) in tRNA + (sulfur carrier)-SH + AH2 + 2 S-adenosyl-L-methionine = 2-methylsulfanyl-N(6)-dimethylallyladenosine(37) in tRNA + (sulfur carrier)-H + 5'-deoxyadenosine + L-methionine + A + S-adenosyl-L-homocysteine + 2 H(+). In terms of biological role, catalyzes the methylthiolation of N6-(dimethylallyl)adenosine (i(6)A), leading to the formation of 2-methylthio-N6-(dimethylallyl)adenosine (ms(2)i(6)A) at position 37 in tRNAs that read codons beginning with uridine. The protein is tRNA-2-methylthio-N(6)-dimethylallyladenosine synthase of Orientia tsutsugamushi (strain Ikeda) (Rickettsia tsutsugamushi).